The sequence spans 518 residues: Mitochondrial distribution and morphology protein 34 (518 aa).

Residues 1-198 enclose the SMP-LTD domain; it reads MSFKVNWNTL…LPTLIHRLSL (198 aa). Disordered regions lie at residues 335–369 and 491–518; these read SRPKRRVIKLGSKKSSVKSTPSAETLASPIPSEMS and IPDVKSHPGTGRKLDTGFEMPPPPPYQV. Basic residues predominate over residues 336 to 350; that stretch reads RPKRRVIKLGSKKSS. A compositionally biased stretch (basic and acidic residues) spans 492-506; it reads PDVKSHPGTGRKLDT.

Belongs to the MDM34 family. As to quaternary structure, component of the ER-mitochondria encounter structure (ERMES) or MDM complex, composed of MMM1, MDM10, MDM12 and MDM34.

It is found in the mitochondrion outer membrane. Component of the ERMES/MDM complex, which serves as a molecular tether to connect the endoplasmic reticulum (ER) and mitochondria. Components of this complex are involved in the control of mitochondrial shape and protein biogenesis, and function in nonvesicular lipid trafficking between the ER and mitochondria. MDM34 is required for the interaction of the ER-resident membrane protein MMM1 and the outer mitochondrial membrane-resident beta-barrel protein MDM10. The chain is Mitochondrial distribution and morphology protein 34 from Meyerozyma guilliermondii (strain ATCC 6260 / CBS 566 / DSM 6381 / JCM 1539 / NBRC 10279 / NRRL Y-324) (Yeast).